The sequence spans 671 residues: UvrABC system protein B (671 aa).

The region spanning 25–412 (EGIDAGLAHQ…AGRIVEQVVR (388 aa)) is the Helicase ATP-binding domain. Residue 38 to 45 (GVTGSGKT) coordinates ATP. The short motif at 91-114 (YYDYYQPEAYVPSSDTFIEKDASI) is the Beta-hairpin element. One can recognise a Helicase C-terminal domain in the interval 429 to 582 (QVDDLLSEIH…QIAFNLEHGI (154 aa)). Residues 601 to 624 (PGSRSKKRKGMAKAAEENARYENE) are disordered. Residues 614–624 (AAEENARYENE) are compositionally biased toward basic and acidic residues. In terms of domain architecture, UVR spans 632 to 667 (NKRIRQLEEKMYQLARDLEFEAAAQMRDEIGKLRER).

Belongs to the UvrB family. As to quaternary structure, forms a heterotetramer with UvrA during the search for lesions. Interacts with UvrC in an incision complex.

It is found in the cytoplasm. The UvrABC repair system catalyzes the recognition and processing of DNA lesions. A damage recognition complex composed of 2 UvrA and 2 UvrB subunits scans DNA for abnormalities. Upon binding of the UvrA(2)B(2) complex to a putative damaged site, the DNA wraps around one UvrB monomer. DNA wrap is dependent on ATP binding by UvrB and probably causes local melting of the DNA helix, facilitating insertion of UvrB beta-hairpin between the DNA strands. Then UvrB probes one DNA strand for the presence of a lesion. If a lesion is found the UvrA subunits dissociate and the UvrB-DNA preincision complex is formed. This complex is subsequently bound by UvrC and the second UvrB is released. If no lesion is found, the DNA wraps around the other UvrB subunit that will check the other stand for damage. The protein is UvrABC system protein B of Pseudomonas syringae pv. syringae (strain B728a).